A 150-amino-acid chain; its full sequence is UPF0506 protein SJCHGC03144 (150 aa).

Positions 1–18 are cleaved as a signal peptide; sequence MNTCIQLLILCLVTVINS. N-linked (GlcNAc...) asparagine glycosylation is found at Asn-20, Asn-36, Asn-52, and Asn-110. Intrachain disulfides connect Cys-116/Cys-130, Cys-123/Cys-134, and Cys-129/Cys-139.

Belongs to the UPF0506 family.

Its subcellular location is the secreted. The chain is UPF0506 protein SJCHGC03144 from Schistosoma japonicum (Blood fluke).